Consider the following 376-residue polypeptide: Fibromodulin (376 aa).

The N-terminal stretch at Met-1–Ala-18 is a signal peptide. Gln-19 is modified (pyrrolidone carboxylic acid). 9 positions are modified to sulfotyrosine: Tyr-20, Tyr-38, Tyr-45, Tyr-47, Tyr-50, Tyr-53, Tyr-55, Tyr-63, and Tyr-65. The 39-residue stretch at Ser-67–Ser-105 folds into the LRRNT domain. 8 LRR repeats span residues Arg-106–Asn-127, Gly-130–Phe-151, His-156–Arg-176, Ser-177–Gly-198, Asn-201–Leu-222, Ser-224–Ala-245, Leu-246–Gly-266, and Lys-269–Thr-289. N-linked (GlcNAc...) (keratan sulfate) asparagine glycosylation occurs at Asn-127. Asn-166 is a glycosylation site (N-linked (GlcNAc...) (keratan sulfate) asparagine). An N-linked (GlcNAc...) (keratan sulfate) asparagine glycan is attached at Asn-201. Asn-291 carries N-linked (GlcNAc...) (keratan sulfate) asparagine glycosylation. 2 LRR repeats span residues Ser-294–Leu-315 and Glu-316–Thr-335. Cys-334 and Cys-367 are disulfide-bonded. The N-linked (GlcNAc...) asparagine glycan is linked to Asn-341. An LRR 11 repeat occupies Lys-344–Pro-365.

Belongs to the small leucine-rich proteoglycan (SLRP) family. SLRP class II subfamily. In terms of assembly, binds to type I and type II collagen. Binds keratan sulfate chains.

It localises to the secreted. The protein resides in the extracellular space. It is found in the extracellular matrix. In terms of biological role, affects the rate of fibrils formation. May have a primary role in collagen fibrillogenesis. This chain is Fibromodulin (FMOD), found in Bos taurus (Bovine).